The chain runs to 323 residues: MRIANKFLVPKESENQRIDQFCLKILPLIKRSDFFKYLRLGKVLLNKTKPQVNTRLKTKDEIAFLFDINPYLQTNNDYLSLDLVKDKLKIIFEDENIIVVDKPTGIVCQPDKKHSIINLSNMLLKHCGYRQFDSNKLNFYPQFAHRIDRNTSGIVIGAKTNKALKELNKVFKNNHLTKRYKGLVFGQFNHLGLQTAYWKKDNNNGIVTVKWKPFPEAKKISTFFENSSYIAQKDMSLITIRLISGRTHQIRACLNLFSNQLVGDKKYSLIQFKNRNNKYKHQALHAYELVFPKLETSKFPILTNYSLMQFKSKIVPWFEYLIQ.

Positions 16–95 (QRIDQFCLKI…DKLKIIFEDE (80 aa)) constitute an S4 RNA-binding domain. Asp148 is a catalytic residue.

Belongs to the pseudouridine synthase RluA family.

The catalysed reaction is a uridine in RNA = a pseudouridine in RNA. This is an uncharacterized protein from Mycoplasma genitalium (strain ATCC 33530 / DSM 19775 / NCTC 10195 / G37) (Mycoplasmoides genitalium).